We begin with the raw amino-acid sequence, 337 residues long: Fructose-1,6-bisphosphatase class 1 (337 aa).

Mg(2+) contacts are provided by glutamate 94, aspartate 116, leucine 118, and aspartate 119. Residues 119 to 122, asparagine 210, and lysine 276 contribute to the substrate site; that span reads DGSS. Residue glutamate 282 coordinates Mg(2+).

Belongs to the FBPase class 1 family. As to quaternary structure, homotetramer. The cofactor is Mg(2+).

The protein localises to the cytoplasm. The enzyme catalyses beta-D-fructose 1,6-bisphosphate + H2O = beta-D-fructose 6-phosphate + phosphate. Its pathway is carbohydrate biosynthesis; gluconeogenesis. This Burkholderia multivorans (strain ATCC 17616 / 249) protein is Fructose-1,6-bisphosphatase class 1.